Consider the following 795-residue polypeptide: Phenylalanine--tRNA ligase beta subunit (795 aa).

Residues 39 to 148 enclose the tRNA-binding domain; that stretch reads AAKFNGVLVG…SDAPVGTDLR (110 aa). Positions 401–476 constitute a B5 domain; sequence PKVTEVRLRR…RVYGYNSIPN (76 aa). Residues D454, D460, E463, and E464 each contribute to the Mg(2+) site. The 94-residue stretch at 701–794 folds into the FDX-ACB domain; sequence SKFPSNRRDI…LAEQFNASLR (94 aa).

Belongs to the phenylalanyl-tRNA synthetase beta subunit family. Type 1 subfamily. In terms of assembly, tetramer of two alpha and two beta subunits. Requires Mg(2+) as cofactor.

It is found in the cytoplasm. It catalyses the reaction tRNA(Phe) + L-phenylalanine + ATP = L-phenylalanyl-tRNA(Phe) + AMP + diphosphate + H(+). This Pseudoalteromonas translucida (strain TAC 125) protein is Phenylalanine--tRNA ligase beta subunit.